A 486-amino-acid chain; its full sequence is UDP-N-acetylmuramate--L-alanine ligase (486 aa).

Gly126 to Thr132 is a binding site for ATP.

It belongs to the MurCDEF family.

It is found in the cytoplasm. The enzyme catalyses UDP-N-acetyl-alpha-D-muramate + L-alanine + ATP = UDP-N-acetyl-alpha-D-muramoyl-L-alanine + ADP + phosphate + H(+). Its pathway is cell wall biogenesis; peptidoglycan biosynthesis. Cell wall formation. The polypeptide is UDP-N-acetylmuramate--L-alanine ligase (Pectobacterium carotovorum subsp. carotovorum (strain PC1)).